The sequence spans 686 residues: DNA ligase (686 aa).

Residues 33–37 (DSVYD), 82–83 (SL), and glutamate 122 contribute to the NAD(+) site. The active-site N6-AMP-lysine intermediate is lysine 124. Arginine 145, glutamate 182, lysine 300, and lysine 324 together coordinate NAD(+). The Zn(2+) site is built by cysteine 418, cysteine 421, cysteine 436, and cysteine 441. Residues 600–686 (AVSQILAGKK…PTVESGDLHP (87 aa)) enclose the BRCT domain.

The protein belongs to the NAD-dependent DNA ligase family. LigA subfamily. Mg(2+) serves as cofactor. Mn(2+) is required as a cofactor.

It carries out the reaction NAD(+) + (deoxyribonucleotide)n-3'-hydroxyl + 5'-phospho-(deoxyribonucleotide)m = (deoxyribonucleotide)n+m + AMP + beta-nicotinamide D-nucleotide.. In terms of biological role, DNA ligase that catalyzes the formation of phosphodiester linkages between 5'-phosphoryl and 3'-hydroxyl groups in double-stranded DNA using NAD as a coenzyme and as the energy source for the reaction. It is essential for DNA replication and repair of damaged DNA. The chain is DNA ligase from Synechococcus sp. (strain JA-2-3B'a(2-13)) (Cyanobacteria bacterium Yellowstone B-Prime).